We begin with the raw amino-acid sequence, 857 residues long: Leucine--tRNA ligase (857 aa).

The 'HIGH' region motif lies at 42–52; sequence PYPSGNLHMGH. A 'KMSKS' region motif is present at residues 615-619; that stretch reads KMSKS. Lys-618 lines the ATP pocket.

The protein belongs to the class-I aminoacyl-tRNA synthetase family.

Its subcellular location is the cytoplasm. The enzyme catalyses tRNA(Leu) + L-leucine + ATP = L-leucyl-tRNA(Leu) + AMP + diphosphate. This chain is Leucine--tRNA ligase, found in Thermosynechococcus vestitus (strain NIES-2133 / IAM M-273 / BP-1).